Here is a 280-residue protein sequence, read N- to C-terminus: RNA polymerase II holoenzyme cyclin-like subunit (280 aa).

The region spanning 23–150 (ERRKGLEDIF…LIEELGTYLV (128 aa)) is the Cyclin N-terminal domain.

The protein belongs to the cyclin family. Cyclin C subfamily. As to quaternary structure, component of the SRB8-11 complex, a regulatory module of the Mediator complex.

The protein localises to the nucleus. Component of the SRB8-11 complex. The SRB8-11 complex is a regulatory module of the Mediator complex which is itself involved in regulation of basal and activated RNA polymerase II-dependent transcription. The SRB8-11 complex may be involved in the transcriptional repression of a subset of genes regulated by Mediator. It may inhibit the association of the Mediator complex with RNA polymerase II to form the holoenzyme complex. The SRB8-11 complex phosphorylates the C-terminal domain (CTD) of the largest subunit of RNA polymerase II. The polypeptide is RNA polymerase II holoenzyme cyclin-like subunit (SSN8) (Yarrowia lipolytica (strain CLIB 122 / E 150) (Yeast)).